A 48-amino-acid polypeptide reads, in one-letter code: MASDLLCCPGGTDRFDHERTGPGPAAVSTEQFVWGRMKSAVPLGAPRD.

This sequence belongs to the PhoAT antitoxin family. Interacts with toxin PhoH2.

In terms of biological role, probable antitoxin component of a type II toxin-antitoxin (TA) system. The probable cognate antitoxin is PhoAT; the toxin gene can be expressed in the absence of the antitoxin gene in M.smegmatis strain mc(2)155. The chain is Probable antitoxin PhoAT from Mycolicibacterium smegmatis (strain ATCC 700084 / mc(2)155) (Mycobacterium smegmatis).